The following is a 468-amino-acid chain: Aspartate ammonia-lyase (468 aa).

Residues Thr101, Ser140, Thr141, Asn142, Thr187, and His188 each coordinate L-aspartate. The interval 317-326 (GSSIMPGKVN) is SS loop. Residue Ser318 is the Proton acceptor of the active site. L-aspartate contacts are provided by Ser319 and Lys324.

Belongs to the class-II fumarase/aspartase family. Aspartase subfamily. In terms of assembly, homotetramer.

It catalyses the reaction L-aspartate = fumarate + NH4(+). With respect to regulation, unlike E.coli aspartase, the enzyme is not activated by the presence of divalent metal ions at alkaline pH. Its function is as follows. Catalyzes the reversible conversion of L-aspartate to fumarate and ammonia. Is highly specific for L-aspartate in the deamination reaction, and cannot use alternative substrates such as D-aspartic acid, alpha-methyl-DL-aspartic acid, beta-methyl-DL-aspartic acid or L-glutamate. In the reverse reaction, alternative nucleophiles (such as hydroxylamine, hydrazine, methoxylamine and methylamine) can replace ammonia in vitro, leading to the formation of N-substituted aspartic acid derivatives. The sequence is that of Aspartate ammonia-lyase from Bacillus sp.